A 712-amino-acid chain; its full sequence is Exocyst complex component EXO70I (712 aa).

An N-terminal signal peptide occupies residues 1–18 (MHKKQLMALLMVPQTSDS). The stretch at 26–53 (LESAYSDLESLLRSSKQMEQNIETMETR) forms a coiled coil. N111 is a glycosylation site (N-linked (GlcNAc...) asparagine).

Belongs to the EXO70 family. Subunit of the exocyst complex that mediates vesicle tethering during exocytosis. Interacts with VPY at the periarbuscular membrane (PAM) around the arbuscule hyphal tips. In terms of tissue distribution, present at low levels in non-mycorrhizal root tips.

It is found in the cell membrane. Its function is as follows. Component of an exocyst subcomplex specifically required for periarbuscular membrane (PAM) biogenesis during arbuscular mycorrhizal (AM) symbiosis with AM fungi (e.g. Glomus versiforme), especially critical during the early branching phase of arbuscule development; probably involved in STR and STR2 delivery into the PAM. The sequence is that of Exocyst complex component EXO70I from Medicago truncatula (Barrel medic).